Here is a 444-residue protein sequence, read N- to C-terminus: Adenylyltransferase and sulfurtransferase UBA4 (444 aa).

Residues Gly81, Asp102, 109–113 (SNLHR), Lys126, and 170–171 (DT) contribute to the ATP site. Cys212 and Cys215 together coordinate Zn(2+). Catalysis depends on Cys229, which acts as the Glycyl thioester intermediate; for adenylyltransferase activity. Residues Cys290 and Cys293 each coordinate Zn(2+). In terms of domain architecture, Rhodanese spans 343–442 (KTKPYVLLDV…YIDEINPSLP (100 aa)). The active-site Cysteine persulfide intermediate; for sulfurtransferase activity is Cys401.

This sequence in the N-terminal section; belongs to the HesA/MoeB/ThiF family. UBA4 subfamily. Zn(2+) serves as cofactor.

The protein resides in the cytoplasm. Its subcellular location is the cytosol. Its pathway is tRNA modification; 5-methoxycarbonylmethyl-2-thiouridine-tRNA biosynthesis. Its function is as follows. Plays a central role in 2-thiolation of mcm(5)S(2)U at tRNA wobble positions of cytosolic tRNA(Lys), tRNA(Glu) and tRNA(Gln). Acts by mediating the C-terminal thiocarboxylation of sulfur carrier URM1. Its N-terminus first activates URM1 as acyl-adenylate (-COAMP), then the persulfide sulfur on the catalytic cysteine is transferred to URM1 to form thiocarboxylation (-COSH) of its C-terminus. The reaction probably involves hydrogen sulfide that is generated from the persulfide intermediate and that acts as a nucleophile towards URM1. Subsequently, a transient disulfide bond is formed. Does not use thiosulfate as sulfur donor; NFS1 probably acting as a sulfur donor for thiocarboxylation reactions. Prior mcm(5) tRNA modification by the elongator complex is required for 2-thiolation. May also be involved in protein urmylation. The chain is Adenylyltransferase and sulfurtransferase UBA4 from Kluyveromyces lactis (strain ATCC 8585 / CBS 2359 / DSM 70799 / NBRC 1267 / NRRL Y-1140 / WM37) (Yeast).